The primary structure comprises 282 residues: NADPH-dependent 7-cyano-7-deazaguanine reductase (282 aa).

88–90 (IES) is a binding site for substrate. 90–91 (SK) serves as a coordination point for NADPH. Cys-190 functions as the Thioimide intermediate in the catalytic mechanism. The active-site Proton donor is the Asp-197. 229-230 (HE) contributes to the substrate binding site. Residue 258-259 (RG) participates in NADPH binding.

It belongs to the GTP cyclohydrolase I family. QueF type 2 subfamily. Homodimer.

The protein resides in the cytoplasm. The catalysed reaction is 7-aminomethyl-7-carbaguanine + 2 NADP(+) = 7-cyano-7-deazaguanine + 2 NADPH + 3 H(+). The protein operates within tRNA modification; tRNA-queuosine biosynthesis. Catalyzes the NADPH-dependent reduction of 7-cyano-7-deazaguanine (preQ0) to 7-aminomethyl-7-deazaguanine (preQ1). The sequence is that of NADPH-dependent 7-cyano-7-deazaguanine reductase from Citrobacter koseri (strain ATCC BAA-895 / CDC 4225-83 / SGSC4696).